Consider the following 430-residue polypeptide: Functional amyloid transporter FapF (430 aa).

The signal sequence occupies residues 1-24; sequence MHRSLSLRAVVCLSTLLPASLLYA. The Periplasmic segment spans residues 25–131; it reads APDVDIETLK…EASGFFGNGK (107 aa). Residues 29–64 are a coiled coil; that stretch reads DIETLKQELLELKQRYEAQQKALAVLEQRVRQVEDQ. Positions 62–114 are disordered; it reads EDQPATPAPKRLAKSPADFKQSGSTVAASSGTGGATGGSSYGQSLKDDSEPAQ. Over residues 92–101 the composition is skewed to gly residues; that stretch reads GTGGATGGSS. The tract at residues 113-125 is alpha helical plug; sequence AQSVSNLYNEASG. Residues 132 to 142 traverse the membrane as a beta stranded segment; sequence FSFETGITYAR. Residues 143–172 are Extracellular-facing; it reads YDARQLTLNGFLALDSIFLGNINLDRIKAD. Residues 173–183 form a beta stranded membrane-spanning segment; the sequence is NWTLDLTGRYN. At 184 to 189 the chain is on the periplasmic side; it reads LDNRWQ. Residues 190–198 form a beta stranded membrane-spanning segment; the sequence is FDVNVPVVY. At 199–224 the chain is on the extracellular side; sequence RESTYQSGGASGGDPQATSEESVSRD. Residues 203–223 are disordered; it reads YQSGGASGGDPQATSEESVSR. A beta stranded membrane pass occupies residues 225–238; sequence PTIGDVNFGIAYKF. Residues 239–246 are Periplasmic-facing; sequence LDESATMP. A beta stranded membrane pass occupies residues 247–256; it reads DAVVSVRVKA. The Extracellular portion of the chain corresponds to 257-288; sequence PTGKEPFGIKLVRSTANDNLYVPESLPTGNGV. Residues 289–298 traverse the membrane as a beta stranded segment; sequence WSITPGLSLV. The Periplasmic portion of the chain corresponds to 299-304; the sequence is KTFDPA. A beta stranded membrane pass occupies residues 305–314; that stretch reads VLFGSVSYTH. Topologically, residues 315–339 are extracellular; sequence NLEDSFDDISSDVNQKVGGKVRLGD. The chain crosses the membrane as a beta stranded span at residues 340 to 348; the sequence is SFQFGVGVA. Over 349 to 356 the chain is Periplasmic; it reads FALNERMS. The beta stranded transmembrane segment at 357–365 threads the bilayer; sequence MSFSVSDLI. Residues 366–386 are Extracellular-facing; it reads QRKSKLKPDGGGWQSIVSSDA. A beta stranded membrane pass occupies residues 387–397; that stretch reads NAGYFNVGMTI. Topologically, residues 398 to 404 are periplasmic; it reads AASENLT. The chain crosses the membrane as a beta stranded span at residues 405 to 412; that stretch reads IVPNLAIG. The Extracellular segment spans residues 413 to 419; sequence MTDDAPD. Residues 420 to 428 traverse the membrane as a beta stranded segment; sequence FTFSLKFPY. The Periplasmic portion of the chain corresponds to 429–430; it reads YF.

Belongs to the amyloid transporter (TC 9.B.153) family. Homotrimer.

It is found in the cell outer membrane. Transports fibril components across the outer membrane. Upon overexpression of the endogenous six-gene locus (fapA-fapF) in situ cells form large clumps during liquid growth, make large amounts of biofilm and produce amyloid fibrils. Expression of the 6 gene operon in E.coli strain BL21(DE3) induces flocculation and biofilm formation with copious extracellular fibrils. In Pseudomonas fluorescens, this protein is Functional amyloid transporter FapF.